We begin with the raw amino-acid sequence, 225 residues long: NAD(P)H-quinone oxidoreductase subunit K, chloroplastic (225 aa).

Cys-43, Cys-44, Cys-108, and Cys-139 together coordinate [4Fe-4S] cluster.

The protein belongs to the complex I 20 kDa subunit family. As to quaternary structure, NDH is composed of at least 16 different subunits, 5 of which are encoded in the nucleus. Requires [4Fe-4S] cluster as cofactor.

The protein resides in the plastid. It localises to the chloroplast thylakoid membrane. The enzyme catalyses a plastoquinone + NADH + (n+1) H(+)(in) = a plastoquinol + NAD(+) + n H(+)(out). It carries out the reaction a plastoquinone + NADPH + (n+1) H(+)(in) = a plastoquinol + NADP(+) + n H(+)(out). Functionally, NDH shuttles electrons from NAD(P)H:plastoquinone, via FMN and iron-sulfur (Fe-S) centers, to quinones in the photosynthetic chain and possibly in a chloroplast respiratory chain. The immediate electron acceptor for the enzyme in this species is believed to be plastoquinone. Couples the redox reaction to proton translocation, and thus conserves the redox energy in a proton gradient. This chain is NAD(P)H-quinone oxidoreductase subunit K, chloroplastic, found in Atropa belladonna (Belladonna).